The primary structure comprises 337 residues: Neurogenic differentiation factor 6 (337 aa).

Positions 43 to 82 (LRGKSIKRAPGEETEKEEEEEDREEEDENGLPRRRGLRKK) are disordered. Acidic residues predominate over residues 54–71 (EETEKEEEEEDREEEDEN). The short motif at 80–86 (RKKKTTK) is the Nuclear localization signal element. Positions 94-146 (FRRQEANARERNRMHGLNDALDNLRKVVPCYSKTQKLSKIETLRLAKNYIWAL) constitute a bHLH domain.

Efficient DNA binding requires dimerization with another bHLH protein.

It is found in the nucleus. Activates E box-dependent transcription in collaboration with TCF3/E47. May be a trans-acting factor involved in the development and maintenance of the mammalian nervous system. Transactivates the promoter of its own gene. The protein is Neurogenic differentiation factor 6 (NEUROD6) of Homo sapiens (Human).